The primary structure comprises 199 residues: Pyridoxine/pyridoxamine 5'-phosphate oxidase (199 aa).

FMN is bound by residues 44–49 (RTVLLK), 59–60 (YS), K66, and Q91. Residue K49 coordinates substrate. The substrate site is built by Y109, R113, and S117. FMN is bound by residues 126 to 127 (QS) and W171. 177-179 (RLH) contacts substrate. An FMN-binding site is contributed by R181.

This sequence belongs to the pyridoxamine 5'-phosphate oxidase family. In terms of assembly, homodimer. It depends on FMN as a cofactor.

The enzyme catalyses pyridoxamine 5'-phosphate + O2 + H2O = pyridoxal 5'-phosphate + H2O2 + NH4(+). It carries out the reaction pyridoxine 5'-phosphate + O2 = pyridoxal 5'-phosphate + H2O2. It functions in the pathway cofactor metabolism; pyridoxal 5'-phosphate salvage; pyridoxal 5'-phosphate from pyridoxamine 5'-phosphate: step 1/1. Its pathway is cofactor metabolism; pyridoxal 5'-phosphate salvage; pyridoxal 5'-phosphate from pyridoxine 5'-phosphate: step 1/1. Its function is as follows. Catalyzes the oxidation of either pyridoxine 5'-phosphate (PNP) or pyridoxamine 5'-phosphate (PMP) into pyridoxal 5'-phosphate (PLP). The sequence is that of Pyridoxine/pyridoxamine 5'-phosphate oxidase from Xanthomonas oryzae pv. oryzae (strain KACC10331 / KXO85).